A 378-amino-acid chain; its full sequence is Erythronate-4-phosphate dehydrogenase (378 aa).

Residues Ser-45 and Thr-66 each contribute to the substrate site. NAD(+)-binding residues include Asp-146 and Thr-175. Residue Arg-208 is part of the active site. Asp-232 provides a ligand contact to NAD(+). The active site involves Glu-237. Residue His-254 is the Proton donor of the active site. Position 257 (Gly-257) interacts with NAD(+). Position 258 (Tyr-258) interacts with substrate.

It belongs to the D-isomer specific 2-hydroxyacid dehydrogenase family. PdxB subfamily. Homodimer.

Its subcellular location is the cytoplasm. It catalyses the reaction 4-phospho-D-erythronate + NAD(+) = (R)-3-hydroxy-2-oxo-4-phosphooxybutanoate + NADH + H(+). The protein operates within cofactor biosynthesis; pyridoxine 5'-phosphate biosynthesis; pyridoxine 5'-phosphate from D-erythrose 4-phosphate: step 2/5. Functionally, catalyzes the oxidation of erythronate-4-phosphate to 3-hydroxy-2-oxo-4-phosphonooxybutanoate. In Enterobacter sp. (strain 638), this protein is Erythronate-4-phosphate dehydrogenase.